We begin with the raw amino-acid sequence, 134 residues long: MHIALIAHDEKKDLMVGFATAYKHLLEPHQLYATGTTGLRIIEATGLTVHRFKSGPLGGDQQIGARISENKMDLVIFLRDPLTAQPHEPDVTALIRLCDVYEIPLATNIGTAEILIRGLGAGFLDWRDLRRNDE.

In terms of domain architecture, MGS-like spans 1–134 (MHIALIAHDE…DWRDLRRNDE (134 aa)). Substrate contacts are provided by residues histidine 8, lysine 12, 34–37 (TGTT), and 54–55 (SG). Aspartate 60 serves as the catalytic Proton donor/acceptor. Histidine 87 lines the substrate pocket.

This sequence belongs to the methylglyoxal synthase family.

The enzyme catalyses dihydroxyacetone phosphate = methylglyoxal + phosphate. In terms of biological role, catalyzes the formation of methylglyoxal from dihydroxyacetone phosphate. The chain is Methylglyoxal synthase from Listeria monocytogenes serotype 4b (strain CLIP80459).